The primary structure comprises 164 residues: Putative 4-hydroxy-4-methyl-2-oxoglutarate aldolase (164 aa).

Substrate is bound by residues 74–77 and Arg96; that span reads GGNL. Asp97 is an a divalent metal cation binding site.

The protein belongs to the class II aldolase/RraA-like family. Homotrimer. The cofactor is a divalent metal cation.

It carries out the reaction 4-hydroxy-4-methyl-2-oxoglutarate = 2 pyruvate. The catalysed reaction is oxaloacetate + H(+) = pyruvate + CO2. Catalyzes the aldol cleavage of 4-hydroxy-4-methyl-2-oxoglutarate (HMG) into 2 molecules of pyruvate. Also contains a secondary oxaloacetate (OAA) decarboxylase activity due to the common pyruvate enolate transition state formed following C-C bond cleavage in the retro-aldol and decarboxylation reactions. This chain is Putative 4-hydroxy-4-methyl-2-oxoglutarate aldolase, found in Thermus thermophilus (strain ATCC BAA-163 / DSM 7039 / HB27).